The sequence spans 210 residues: UPF0301 protein Mnod_6933 (210 aa).

It belongs to the UPF0301 (AlgH) family.

This Methylobacterium nodulans (strain LMG 21967 / CNCM I-2342 / ORS 2060) protein is UPF0301 protein Mnod_6933.